Reading from the N-terminus, the 535-residue chain is Sucrose transport protein SUT5 (535 aa).

The Cytoplasmic segment spans residues 1–53; it reads MEEGRRGDREGKSAAGWTALSTTKTTLEEKRRLQANGSVGGDAGTSGFRRIVR. Residues 54 to 74 traverse the membrane as a helical segment; sequence LFFACMVAGGIQYGWALQLSL. The Extracellular segment spans residues 75–87; the sequence is LSPYSQTLGISHS. Residues 88-108 traverse the membrane as a helical segment; sequence YVSLTWICGPIAGFVVQPIVG. Residues 109 to 122 are Cytoplasmic-facing; that stretch reads YYSDRCTMKMGRRR. The chain crosses the membrane as a helical span at residues 123–143; sequence PFILVGCLIICISVMIIGFSA. Over 144-163 the chain is Extracellular; that stretch reads DIGRHLGDTKEHCSTYTGPR. A helical membrane pass occupies residues 164 to 184; the sequence is WSAAMVYIVGFWFLDFANNTV. At 185–203 the chain is on the cytoplasmic side; that stretch reads QGPARAMMADLSAGHHGPN. A helical transmembrane segment spans residues 204-224; sequence VGQSIFSLWMAIGSVLGYLSG. The Extracellular segment spans residues 225–249; it reads ANGKWHEWFPWLKTAACCDACANLK. Residues 250 to 270 form a helical membrane-spanning segment; the sequence is GAFFTAVLLIVVSMTVTMYLA. The Cytoplasmic portion of the chain corresponds to 271–302; that stretch reads DEMPLDKQDVDTSGGGGCAVFVDLFKSLRNLP. Residues 303–323 traverse the membrane as a helical segment; sequence PAMFKVLAVTAVTWLSWFPFI. At 324–354 the chain is on the extracellular side; that stretch reads QYNTDWMGREIYHGEPQGTAAKADVYDAGVR. The chain crosses the membrane as a helical span at residues 355–375; that stretch reads EGAMGLLFCSVALGVTSFVIP. Topologically, residues 376-384 are cytoplasmic; sequence KLCRRLTSK. The helical transmembrane segment at 385–405 threads the bilayer; sequence VVWSISNFLVFALMAVMVAVG. At 406-429 the chain is on the extracellular side; that stretch reads MVSMRGYRPSLAAGLTGPDPTLKA. A helical membrane pass occupies residues 430–450; sequence VALVVFALIGIPQAVLFSVPW. Topologically, residues 451–465 are cytoplasmic; sequence AVASEVTAEEGGGQG. The helical transmembrane segment at 466–486 threads the bilayer; the sequence is LAIGVLNIAIVVPQLVIALTA. Residues 487–498 lie on the Extracellular side of the membrane; sequence GPIDGAFNKGNT. A helical membrane pass occupies residues 499 to 519; the sequence is PAFGIGGAFAFICGVLALIWL. Residues 520 to 535 are Cytoplasmic-facing; that stretch reads PKTRGVSNAAVVAGGH.

The protein belongs to the glycoside-pentoside-hexuronide (GPH) cation symporter transporter (TC 2.A.2.4) family. In terms of assembly, homodimer. Widely expressed. Highest expression in sink leaves and lowest in germinating seeds.

It is found in the cell membrane. It participates in glycan biosynthesis; sucrose metabolism. Its function is as follows. Responsible for the transport of sucrose into the cell, with the concomitant uptake of protons (symport system). Can also transport other glucosides such as maltose, arbutin, salicin, helicin, alpha-phenylglucoside and beta-phenylglucoside. The sequence is that of Sucrose transport protein SUT5 (SUT5) from Oryza sativa subsp. japonica (Rice).